Here is a 95-residue protein sequence, read N- to C-terminus: Membrane protein insertion and folding monitor (95 aa).

The helical transmembrane segment at L12–F32 threads the bilayer. The tract at residues D86 to D89 is crucial for elongation arrest.

It localises to the cell membrane. Its function is as follows. Sensor protein that up-regulates translation of the secondary membrane protein insertase (MisCB/YqjG) when activity of the primary membrane protein insertase (MisCA/SpoIIIJ) is limited. Acts as a ribosome-nascent chain complex. When the primary membrane protein insertase activity or level is reduced, the membrane insertion of MifM is impaired, which induces arrest of MifM translation and unfolding of the mRNA hairpin. Unfolding leads to translation of the downstream gene, which encodes the secondary membrane protein insertase MisCB/YqjG. Translation arrest of MifM is mediated by interaction of its C-terminal domain with the ribosomal polypeptide exit tunnel. Undergoes multisite stalling, which may allow a sufficient duration of ribosomal stalling and consequently sufficient levels of MisCB/YqjG. This is Membrane protein insertion and folding monitor (mifM) from Bacillus subtilis (strain 168).